The chain runs to 373 residues: Anhydro-N-acetylmuramic acid kinase (373 aa).

12–19 (GTSLDGVD) provides a ligand contact to ATP.

Belongs to the anhydro-N-acetylmuramic acid kinase family.

The enzyme catalyses 1,6-anhydro-N-acetyl-beta-muramate + ATP + H2O = N-acetyl-D-muramate 6-phosphate + ADP + H(+). It functions in the pathway amino-sugar metabolism; 1,6-anhydro-N-acetylmuramate degradation. Its pathway is cell wall biogenesis; peptidoglycan recycling. Its function is as follows. Catalyzes the specific phosphorylation of 1,6-anhydro-N-acetylmuramic acid (anhMurNAc) with the simultaneous cleavage of the 1,6-anhydro ring, generating MurNAc-6-P. Is required for the utilization of anhMurNAc either imported from the medium or derived from its own cell wall murein, and thus plays a role in cell wall recycling. This is Anhydro-N-acetylmuramic acid kinase from Salmonella newport (strain SL254).